Here is a 245-residue protein sequence, read N- to C-terminus: Terpene cyclase esdpB (245 aa).

A run of 7 helical transmembrane segments spans residues 19 to 39 (MVAS…VTTI), 48 to 68 (SGVT…FAVI), 75 to 95 (IAAL…YVSV), 112 to 132 (LPVV…ALSM), 140 to 160 (LYWG…GLLI), 177 to 197 (FIAS…WPSA), and 208 to 228 (WLSG…YHIS).

It belongs to the paxB family.

It localises to the membrane. Its pathway is secondary metabolite biosynthesis; terpenoid biosynthesis. Functionally, terpene cyclase; part of the cluster that mediates the biosynthesis of shearones, diterpenoid pyrones (DPs) which are structurally diverse meroterpenoids consisting of a diterpene linked by a pyrone, and which may exhibit a range of bioactivities. Within the pathway, esdpB takes part to the biosynthesis of the molecular scaffold by catalyzing the cyclization of the prenyl group initiated by protonation and ring-opening of the epoxide to produce the diterpenoid pyrone scaffold. The molecular scaffold is commonly biosynthesized by a series of enzymes including the non-reducing polyketide synthase (NR-PKS) esdpA that generates an alpha-pyrone; the prenyltransferase esdpC that attaches a geranylgeranyl pyrophosphate (GGPP) produced by the GGPP synthase (GGPPS) esdpD onto the pyrone unit; the FAD-dependent monooxygenase esdpE that converts an olefin on the diterpene unit into an epoxide; and the terpene cyclase esdpB that catalyzes the cyclization reactions to give the molecular backbone shearone A. In the modification steps, esdpF oxidizes the hydroxy group to a ketone at C-3 and esdpG then attaches hydroxy groups at both C-11 and C-12. After that, esdpI hydroxylates at C-20 and esdpH hydroxylates at C-6'. The ether bridge is generated by nucleophilic attack of the hydroxy group at C-20 to the carbonyl carbon at C-3. EsdpH can also functions prior to esdpI. The different combinations of these modification enzymes lead to the production of diverse shearone derivatives, shearone I being the end product of the pathway. The alpha-ketoglutarate-dependent dioxygenase esdpJ seems not to be involved in this pathway. This Penicillium shearii (Eupenicillium shearii) protein is Terpene cyclase esdpB.